The primary structure comprises 138 residues: Large ribosomal subunit protein uL16 (138 aa).

Residues 1–14 show a composition bias toward basic residues; that stretch reads MLQPKRTKYRRTHR. Positions 1–24 are disordered; it reads MLQPKRTKYRRTHRLQHDKGEAHT. The span at 15–24 shows a compositional bias: basic and acidic residues; it reads LQHDKGEAHT.

This sequence belongs to the universal ribosomal protein uL16 family. In terms of assembly, part of the 50S ribosomal subunit.

In terms of biological role, binds 23S rRNA and is also seen to make contacts with the A and possibly P site tRNAs. This chain is Large ribosomal subunit protein uL16, found in Mycoplasma mobile (strain ATCC 43663 / 163K / NCTC 11711) (Mesomycoplasma mobile).